A 673-amino-acid chain; its full sequence is Gametogenetin (673 aa).

The tract at residues 1 to 599 (MGNVQSEPSA…TSTAGASNKG (599 aa)) is disordered. The span at 14–30 (SRKEQASDRASDSRRTP) shows a compositional bias: basic and acidic residues. Low complexity predominate over residues 70–83 (ASSSPLPLTLELPS). The tract at residues 125-506 (RGLLEASHRG…APTPPSTLSP (382 aa)) is interaction with GGNBP1. Residues 161 to 178 (PAPPPTPLEPRKQLPPAP) are compositionally biased toward pro residues. Polar residues predominate over residues 192 to 202 (LASSATSPTES). Residues 257 to 268 (SASGPLAAKASP) show a composition bias toward low complexity. S399 carries the phosphoserine modification. The segment covering 413-424 (PRRPTPALLAPP) has biased composition (low complexity). Pro residues predominate over residues 438–475 (RPVPPSPQQIPPLPPPPPTPPATPPPAPPPTPQPPALP). The segment covering 504–531 (LSPTAAADQVPAATPATVTSQVPATATA) has biased composition (low complexity). Residues 511–673 (DQVPAATPAT…HYDLQATHST (163 aa)) are interactions with ZNF403/GGNBP2 and OAZ3. A compositionally biased stretch (basic residues) spans 542–551 (TRTRRNKGPR).

In terms of assembly, isoform 1 and isoform 3 interact with FANCL. Isoform 1 interacts with GGNBP1, ZNF403/GGNBP2 and OAZ3. Isoform 2 interacts with GGNBP1. As to expression, testis-specific. Specifically expressed in the germ cells and not in the somatic, Sertoli, or Leydig cells. In adult testis, expression starts in stage VIII pachytene spermatocytes, increases in stage IX and X pachytene spermatocytes, and culminates in stage XI diplotene spermatocytes and the meiotic cells in stage XII. Expression decreases slightly in step 1-3 spermatids, further decreases in step 4-11 spermatids, and is no longer detectable in step 12 spermatids and beyond. Isoform 2 is mainly expressed in testis.

The protein resides in the cytoplasm. It localises to the perinuclear region. It is found in the cytoplasmic vesicle. The protein localises to the nucleus. Its subcellular location is the nucleolus. Functionally, may be involved in spermatogenesis. This Mus musculus (Mouse) protein is Gametogenetin (Ggn).